An 811-amino-acid polypeptide reads, in one-letter code: Glycerol-3-phosphate acyltransferase (811 aa).

Positions 309 to 314 match the HXXXXD motif motif; the sequence is CHRSHM.

Belongs to the GPAT/DAPAT family.

Its subcellular location is the cell inner membrane. The enzyme catalyses sn-glycerol 3-phosphate + an acyl-CoA = a 1-acyl-sn-glycero-3-phosphate + CoA. It functions in the pathway phospholipid metabolism; CDP-diacylglycerol biosynthesis; CDP-diacylglycerol from sn-glycerol 3-phosphate: step 1/3. The chain is Glycerol-3-phosphate acyltransferase from Colwellia psychrerythraea (strain 34H / ATCC BAA-681) (Vibrio psychroerythus).